We begin with the raw amino-acid sequence, 3977 residues long: Hybrid PKS-NRPS synthetase gkaA (3977 aa).

The Ketosynthase family 3 (KS3) domain maps to 4-441; that stretch reads EEPIAVIGSG…GTNAHVILEN (438 aa). Residues Cys-177, His-316, and His-361 each act as for beta-ketoacyl synthase activity in the active site. A Malonyl-CoA:ACP transacylase (MAT) domain is found at 551–867; the sequence is VFTGQGAQWP…TGVIHRGKND (317 aa). An N-terminal hotdog fold region spans residues 937–1072; that stretch reads NPLLGTRTTD…GRITVTLGES (136 aa). Residues 937 to 1241 enclose the PKS/mFAS DH domain; it reads NPLLGTRTTD…VVAFSEATAD (305 aa). Catalysis depends on His-969, which acts as the Proton acceptor; for dehydratase activity. The interval 1087 to 1241 is C-terminal hotdog fold; that stretch reads LVSIPQDRFY…VVAFSEATAD (155 aa). Catalysis depends on Asp-1147, which acts as the Proton donor; for dehydratase activity. Residues 1286 to 1580 form a methyltransferase (cMeT) domain region; that stretch reads YMKKTVEEFP…FSGIDSSTPE (295 aa). The 174-residue stretch at 2128–2301 folds into the Ketoreductase (KR) domain; that stretch reads TYVLFGLTSD…AASILHIGAV (174 aa). Residues 2409 to 2490 form the Carrier 1 domain; sequence SEVFEIISGA…QLLEYAIDNM (82 aa). The residue at position 2450 (Ser-2450) is an O-(pantetheine 4'-phosphoryl)serine. The interval 2497-2542 is disordered; sequence HSNGEQGTVSDSGSTNIQLTPASTPSVPSVNLASDSTGSSQVGEDV. Over residues 2499 to 2538 the composition is skewed to polar residues; the sequence is NGEQGTVSDSGSTNIQLTPASTPSVPSVNLASDSTGSSQV. The tract at residues 2584-3018 is condensation; the sequence is EKIIPMSPGQ…LKDISLFSKE (435 aa). The tract at residues 3048–3437 is adenylation; the sequence is IAEHPDTISI…GALEILGRID (390 aa). Positions 3552–3632 constitute a Carrier 2 domain; sequence FSLTPTEDKL…AMASLITPAS (81 aa). O-(pantetheine 4'-phosphoryl)serine is present on Ser-3592. The region spanning 3672–3890 is the Thioester reductase (TE) domain; the sequence is LTGATGFLGH…FVDLVSVQNV (219 aa).

In the C-terminal section; belongs to the NRP synthetase family. Pantetheine 4'-phosphate is required as a cofactor.

The protein operates within mycotoxin biosynthesis. Hybrid PKS-NRPS synthetase; part of the gene cluster that mediates the biosynthesis of GKK1032, fungal natural products containing a macrocyclic para-cyclophane connected to a decahydrofluorene ring system that show potent antitumor activities. Within the pathway, the PKS-NRPS gkaA, with the help of the trans-enoyl reductase gkaC, synthesize the polyketide-tyrosyl acyl thioester product which can be reductively off-loaded by the terminal reductase (R) domain in gkaA. The PKS module of gkaA acts in combination with the trans-acting enoyl reductase gkaC to produce a methylated polyketide attached to the ACP domain. In parallel, the adenylation (A) domain of the NRPS module activated L-tyrosine, which is then transferred to the ACP domain. The condensation (C) domain subsequently links this group to the polyketide chain, forming an enzyme-bound amide. The alpha/beta hydrolase gkaG is then required to catalyze the subsequent Knoevenagel condensation that affords the 3-pyrrolin-2-one ring, whereas the three proteins gkaB, gkadX and gkaZ then function synergistically to form the cyclophane. The chain is Hybrid PKS-NRPS synthetase gkaA from Penicillium citrinum.